Here is a 224-residue protein sequence, read N- to C-terminus: MNILFFGPNGSGKGTQGAILKEKYSLPHIESGAIFRENISKGTELGAKAKEYIDRGDLVPDDITIPMILDRLQQDDCKKGWLLDGFPRNKVQAETLDATLKKANMALDIVVEIELDREIAKNRIMGRRLCVNDNNHPNNIFIDAIKPDGDKCRVCGGELKTRSDDQDEAAIDKRHNIYYDTETGTLAAAYYFRDLAAKGGSLKYITLDGAPGVKEVAAELVSKL.

10–15 (GSGKGT) is a binding site for ATP. The interval 30 to 59 (ESGAIFRENISKGTELGAKAKEYIDRGDLV) is NMP. AMP is bound by residues serine 31, arginine 36, 57–59 (DLV), 85–88 (GFPR), and glutamine 92. The LID stretch occupies residues 126–165 (GRRLCVNDNNHPNNIFIDAIKPDGDKCRVCGGELKTRSDD). Residue arginine 127 coordinates ATP. AMP is bound by residues arginine 162 and arginine 174. Residue proline 211 participates in ATP binding.

This sequence belongs to the adenylate kinase family. Monomer.

It localises to the cytoplasm. It carries out the reaction AMP + ATP = 2 ADP. It functions in the pathway purine metabolism; AMP biosynthesis via salvage pathway; AMP from ADP: step 1/1. Catalyzes the reversible transfer of the terminal phosphate group between ATP and AMP. Plays an important role in cellular energy homeostasis and in adenine nucleotide metabolism. The sequence is that of Adenylate kinase from Desulfosudis oleivorans (strain DSM 6200 / JCM 39069 / Hxd3) (Desulfococcus oleovorans).